The chain runs to 344 residues: Protein RecA (344 aa).

66–73 (GPESSGKT) is an ATP binding site.

Belongs to the RecA family.

It localises to the cytoplasm. Can catalyze the hydrolysis of ATP in the presence of single-stranded DNA, the ATP-dependent uptake of single-stranded DNA by duplex DNA, and the ATP-dependent hybridization of homologous single-stranded DNAs. It interacts with LexA causing its activation and leading to its autocatalytic cleavage. This is Protein RecA from Methylobacillus flagellatus (strain ATCC 51484 / DSM 6875 / VKM B-1610 / KT).